A 223-amino-acid polypeptide reads, in one-letter code: Deoxyribose-phosphate aldolase (223 aa).

Aspartate 91 acts as the Proton donor/acceptor in catalysis. The active-site Schiff-base intermediate with acetaldehyde is lysine 153. Lysine 182 acts as the Proton donor/acceptor in catalysis.

It belongs to the DeoC/FbaB aldolase family. DeoC type 1 subfamily.

Its subcellular location is the cytoplasm. The enzyme catalyses 2-deoxy-D-ribose 5-phosphate = D-glyceraldehyde 3-phosphate + acetaldehyde. It participates in carbohydrate degradation; 2-deoxy-D-ribose 1-phosphate degradation; D-glyceraldehyde 3-phosphate and acetaldehyde from 2-deoxy-alpha-D-ribose 1-phosphate: step 2/2. In terms of biological role, catalyzes a reversible aldol reaction between acetaldehyde and D-glyceraldehyde 3-phosphate to generate 2-deoxy-D-ribose 5-phosphate. This chain is Deoxyribose-phosphate aldolase, found in Streptococcus pyogenes serotype M2 (strain MGAS10270).